Here is a 397-residue protein sequence, read N- to C-terminus: CCA-adding enzyme (397 aa).

2 residues coordinate ATP: glycine 27 and arginine 30. CTP is bound by residues glycine 27 and arginine 30. 2 residues coordinate Mg(2+): aspartate 40 and aspartate 42. ATP contacts are provided by arginine 111, aspartate 154, arginine 157, arginine 160, and arginine 163. Arginine 111, aspartate 154, arginine 157, arginine 160, and arginine 163 together coordinate CTP.

Belongs to the tRNA nucleotidyltransferase/poly(A) polymerase family. Bacterial CCA-adding enzyme type 3 subfamily. Homodimer. Requires Mg(2+) as cofactor.

The catalysed reaction is a tRNA precursor + 2 CTP + ATP = a tRNA with a 3' CCA end + 3 diphosphate. The enzyme catalyses a tRNA with a 3' CCA end + 2 CTP + ATP = a tRNA with a 3' CCACCA end + 3 diphosphate. Catalyzes the addition and repair of the essential 3'-terminal CCA sequence in tRNAs without using a nucleic acid template. Adds these three nucleotides in the order of C, C, and A to the tRNA nucleotide-73, using CTP and ATP as substrates and producing inorganic pyrophosphate. tRNA 3'-terminal CCA addition is required both for tRNA processing and repair. Also involved in tRNA surveillance by mediating tandem CCA addition to generate a CCACCA at the 3' terminus of unstable tRNAs. While stable tRNAs receive only 3'-terminal CCA, unstable tRNAs are marked with CCACCA and rapidly degraded. In Bacillus licheniformis (strain ATCC 14580 / DSM 13 / JCM 2505 / CCUG 7422 / NBRC 12200 / NCIMB 9375 / NCTC 10341 / NRRL NRS-1264 / Gibson 46), this protein is CCA-adding enzyme.